Here is a 1174-residue protein sequence, read N- to C-terminus: Lysylphosphatidylglycerol biosynthesis bifunctional protein LysX (1174 aa).

Residues 1–665 (MGVGLHLTVP…LLHHDGSAPD (665 aa)) are phosphatidylglycerol lysyltransferase. The segment at 9-36 (VPGLRRDGRGVQSNSHDTSSKTTADISR) is disordered. A compositionally biased stretch (polar residues) spans 19–33 (VQSNSHDTSSKTTAD). 7 helical membrane-spanning segments follow: residues 82–102 (VPAAAGWTVGVIATLSLLASV), 124–144 (FPDTNFAWSFVLALLAAALTA), 148–168 (IAWLVLLANMVLAAVVNAAEI), 179–199 (FGENLGFAVHVVAIVVLVLGY), 216–236 (AVWLAGAVVGIVASWGLVELF), 274–294 (AIFGLFGAFALIGAAIVLFLS), and 614–634 (VIPRVGVASVIAEGFLVLPFS). The lysine--tRNA ligase stretch occupies residues 666–1174 (VSGLRQVGLT…TLPFPLAKPH (509 aa)). The segment at residues 728 to 806 (VSVSGRIMRI…SLIVSGWRLI (79 aa)) is a DNA-binding region (OB). Asp-1086 and Glu-1093 together coordinate Mg(2+).

In the N-terminal section; belongs to the LPG synthetase family. The protein in the C-terminal section; belongs to the class-II aminoacyl-tRNA synthetase family. It depends on Mg(2+) as a cofactor.

The protein localises to the cell membrane. It carries out the reaction tRNA(Lys) + L-lysine + ATP = L-lysyl-tRNA(Lys) + AMP + diphosphate. The catalysed reaction is L-lysyl-tRNA(Lys) + a 1,2-diacyl-sn-glycero-3-phospho-(1'-sn-glycerol) = a 1,2-diacyl-sn-glycero-3-phospho-1'-(3'-O-L-lysyl)-sn-glycerol + tRNA(Lys). Functionally, catalyzes the production of L-lysyl-tRNA(Lys)transfer and the transfer of a lysyl group from L-lysyl-tRNA(Lys) to membrane-bound phosphatidylglycerol (PG), which produces lysylphosphatidylglycerol (LPG), one of the components of the bacterial membrane with a positive net charge. LPG synthesis contributes to the resistance to cationic antimicrobial peptides (CAMPs) and likely protects M.tuberculosis against the CAMPs produced by competiting microorganisms (bacteriocins). In fact, the modification of anionic phosphatidylglycerol with positively charged L-lysine results in repulsion of the peptides. The sequence is that of Lysylphosphatidylglycerol biosynthesis bifunctional protein LysX (lysX) from Mycobacterium tuberculosis (strain KZN 1435 / MDR).